An 875-amino-acid chain; its full sequence is Translation initiation factor IF-2 (875 aa).

2 disordered regions span residues 123–204 (EKEK…EKPK) and 240–278 (ETKEEKAELEALRKLMGPQPKKKKKKKKKKEEEKAPVET). The segment covering 240-252 (ETKEEKAELEALR) has biased composition (basic and acidic residues). Over residues 259-268 (PKKKKKKKKK) the composition is skewed to basic residues. Residues 269–278 (KEEEKAPVET) are compositionally biased toward basic and acidic residues. Residues 379 to 547 (ERPPVVTVMG…NILLVSEILE (169 aa)) form the tr-type G domain. Residues 388–395 (GHVDHGKT) form a G1 region. 388–395 (GHVDHGKT) lines the GTP pocket. Residues 413–417 (GITQH) form a G2 region. A G3 region spans residues 435 to 438 (DTPG). Residues 435–439 (DTPGH) and 489–492 (NKID) contribute to the GTP site. The segment at 489-492 (NKID) is G4. The interval 525–527 (SAK) is G5.

This sequence belongs to the TRAFAC class translation factor GTPase superfamily. Classic translation factor GTPase family. IF-2 subfamily.

Its subcellular location is the cytoplasm. Its function is as follows. One of the essential components for the initiation of protein synthesis. Protects formylmethionyl-tRNA from spontaneous hydrolysis and promotes its binding to the 30S ribosomal subunits. Also involved in the hydrolysis of GTP during the formation of the 70S ribosomal complex. The sequence is that of Translation initiation factor IF-2 from Persephonella marina (strain DSM 14350 / EX-H1).